The following is a 370-amino-acid chain: MALPWELEEDILSRLPPISLVRFRTVSKHWNSLFNDKTFINNHLSRSRPEFIILTNSKIYSVDIIDHNNIDPTIRLHEIPTYDIHSRGTDLNRTIINTCDEFLFYNYRYWDNMTALWNPWLRQVRWIEYANQEFCVFGLGYDNSRPEKVYKILGHLFCHGKVLRDQKVVIYECASDSLRFIDRPEDDDWPITETAKRSNVSLNGNLYWFGCSNYENDEYYIRIFDFSTEDFKPFCLLPCQMSHSTDELVLAVYKGDRFSLLKQCSVTREIGVWVTKERISNDNGNGGEGVEWLKLMTLSKPNLPKLFGTVSYFIYGKTLYMCNGDDETALACIYIVREDVCKKFQIGSGNINCRHCVYTPNLLSLPLFIG.

In terms of domain architecture, F-box spans 1–43; that stretch reads MALPWELEEDILSRLPPISLVRFRTVSKHWNSLFNDKTFINNH.

In terms of tissue distribution, ubiquitous, at low levels.

In terms of biological role, negatively regulates a plant defense signaling pathway which is independent of salicylic acid (SA) and systemic acquired resistance (SAR). Confers sensitivity to P.syringae and P.parasitica. The protein is Protein SUPPRESSOR OF NIM1 1 (SON1) of Arabidopsis thaliana (Mouse-ear cress).